A 493-amino-acid polypeptide reads, in one-letter code: Cobyric acid synthase (493 aa).

A GATase cobBQ-type domain is found at 246–440 (PIDIAVIKMP…IHGVFDGVVF (195 aa)). Cys-326 functions as the Nucleophile in the catalytic mechanism. Residue His-432 is part of the active site.

Belongs to the CobB/CobQ family. CobQ subfamily.

It functions in the pathway cofactor biosynthesis; adenosylcobalamin biosynthesis. Its function is as follows. Catalyzes amidations at positions B, D, E, and G on adenosylcobyrinic A,C-diamide. NH(2) groups are provided by glutamine, and one molecule of ATP is hydrogenolyzed for each amidation. The sequence is that of Cobyric acid synthase from Clostridium botulinum (strain ATCC 19397 / Type A).